A 78-amino-acid chain; its full sequence is Probable [Fe-S]-dependent transcriptional repressor (78 aa).

Residues C56, C61, C64, and C70 each coordinate iron-sulfur cluster.

It belongs to the FeoC family.

Its function is as follows. May function as a transcriptional regulator that controls feoABC expression. The sequence is that of Probable [Fe-S]-dependent transcriptional repressor from Escherichia coli (strain UTI89 / UPEC).